Here is a 120-residue protein sequence, read N- to C-terminus: Small ribosomal subunit protein uS13 (120 aa).

Positions 92–120 (HRKGLPVRGQTTKNNARTRKGKKKTVGSK) are disordered. Residues 107-120 (ARTRKGKKKTVGSK) show a composition bias toward basic residues.

It belongs to the universal ribosomal protein uS13 family. In terms of assembly, part of the 30S ribosomal subunit. Forms a loose heterodimer with protein S19. Forms two bridges to the 50S subunit in the 70S ribosome.

Located at the top of the head of the 30S subunit, it contacts several helices of the 16S rRNA. In the 70S ribosome it contacts the 23S rRNA (bridge B1a) and protein L5 of the 50S subunit (bridge B1b), connecting the 2 subunits; these bridges are implicated in subunit movement. Contacts the tRNAs in the A and P-sites. The polypeptide is Small ribosomal subunit protein uS13 (Helicobacter hepaticus (strain ATCC 51449 / 3B1)).